A 335-amino-acid polypeptide reads, in one-letter code: Succinylglutamate desuccinylase (335 aa).

Zn(2+) is bound by residues His-59, Glu-62, and His-151. Glu-215 is a catalytic residue.

The protein belongs to the AspA/AstE family. Succinylglutamate desuccinylase subfamily. Zn(2+) is required as a cofactor.

It carries out the reaction N-succinyl-L-glutamate + H2O = L-glutamate + succinate. It participates in amino-acid degradation; L-arginine degradation via AST pathway; L-glutamate and succinate from L-arginine: step 5/5. Functionally, transforms N(2)-succinylglutamate into succinate and glutamate. The sequence is that of Succinylglutamate desuccinylase from Pseudomonas putida (strain ATCC 47054 / DSM 6125 / CFBP 8728 / NCIMB 11950 / KT2440).